A 585-amino-acid chain; its full sequence is Lipoprotein LpqB (585 aa).

The signal sequence occupies residues 1–17; that stretch reads MGRKLLGLLMLAVLLAG. Cysteine 18 is lipidated: N-palmitoyl cysteine. Cysteine 18 is lipidated: S-diacylglycerol cysteine. 2 disordered regions span residues 24 to 48 and 560 to 585; these read SSAP…TPGM and PSAD…VLPG.

Belongs to the LpqB lipoprotein family.

The protein localises to the cell membrane. The chain is Lipoprotein LpqB from Mycolicibacterium paratuberculosis (strain ATCC BAA-968 / K-10) (Mycobacterium paratuberculosis).